The following is a 256-amino-acid chain: Omega-amidase YafV (256 aa).

Residues 4 to 234 form the CN hydrolase domain; it reads LKLTLLQQPL…AAQLDAELSL (231 aa). The Proton acceptor role is filled by E42. K107 is a catalytic residue. The active-site Nucleophile is C141.

The protein belongs to the carbon-nitrogen hydrolase superfamily. NIT1/NIT2 family.

It catalyses the reaction a monoamide of a dicarboxylate + H2O = a dicarboxylate + NH4(+). In terms of biological role, hydrolyzes alpha-ketoglutaramate (a-KGM) to alpha-ketoglutarate (alpha-KG) and ammonia (specific activity 21 umol/min/mg), has very weak activity on L-glutamine, and no activity on deaminated glutathione (dGSH) or glutathione. May function as a metabolite repair enzyme. This chain is Omega-amidase YafV, found in Yersinia enterocolitica.